The following is a 251-amino-acid chain: Small ribosomal subunit protein uS2 (251 aa).

Belongs to the universal ribosomal protein uS2 family.

The chain is Small ribosomal subunit protein uS2 from Azoarcus sp. (strain BH72).